The chain runs to 690 residues: Eukaryotic translation initiation factor 3 subunit B (690 aa).

The segment covering 1–11 has biased composition (basic and acidic residues); it reads MAKKKSEEHSG. The interval 1–36 is disordered; that stretch reads MAKKKSEEHSGADANDSDYQEEPNFEDPPGFVDNIS. Acidic residues predominate over residues 15-25; sequence NDSDYQEEPNF. The 85-residue stretch at 57–141 folds into the RRM domain; it reads SVVVVDNIPK…HTFAVNLFTD (85 aa). WD repeat units follow at residues 207–246, 293–331, 334–369, 442–484, and 530–575; these read TRER…KIQK, DGMS…LLDL, IKIP…TLME, EIRE…KPSL, and PDHF…IKRT. Residues 595-645 are a coiled coil; sequence EEKQKEIKKNLKKYYAAFEQKDRLRLTRASKELLEKRSQLRETFMEYRNKR.

This sequence belongs to the eIF-3 subunit B family. In terms of assembly, component of the eukaryotic translation initiation factor 3 (eIF-3) complex. The eIF-3 complex interacts with pix. Interacts with mxt.

The protein resides in the cytoplasm. In terms of biological role, RNA-binding component of the eukaryotic translation initiation factor 3 (eIF-3) complex, which is involved in protein synthesis of a specialized repertoire of mRNAs and, together with other initiation factors, stimulates binding of mRNA and methionyl-tRNAi to the 40S ribosome. The eIF-3 complex specifically targets and initiates translation of a subset of mRNAs involved in cell proliferation. The polypeptide is Eukaryotic translation initiation factor 3 subunit B (Drosophila erecta (Fruit fly)).